Reading from the N-terminus, the 433-residue chain is KH domain-containing, RNA-binding, signal transduction-associated protein 1 (433 aa).

Residues 1 to 79 (MQRRDDSSAR…PLLPGGAVKM (79 aa)) form a disordered region. Over residues 41–76 (GAQHPQPLLTGGAAAGSSGAQGPAAANPAPLLPGGA) the composition is skewed to low complexity. Residues 82 to 243 (ENKYLPELMA…VKKFLVPDMM (162 aa)) form an involved in homodimerization region. The KH domain maps to 171 to 197 (QEETGAKISVLGKGSMRDKAKEEELRK). Disordered stretches follow at residues 259–305 (GVPE…ALVR), 317–351 (AAVA…PPPP), and 403–433 (QDDW…YGRY). Positions 277–300 (APPPPPPVPRGRGVGPPPPPPPPR) are enriched in pro residues. Residues 329–342 (VRGAPAPRARAAGI) are compositionally biased toward low complexity. The span at 424 to 433 (AYREHPYGRY) shows a compositional bias: basic and acidic residues.

The protein belongs to the KHDRBS family. Self-associates to form homooligomers when bound to RNA, oligomerization appears to be limited when binding to proteins. In terms of processing, tyrosine phosphorylated by several non-receptor tyrosine kinases including LCK, FYN and JAK3. Post-translationally, acetylated. Positively correlates with ability to bind RNA. Methylated by HRMT1L2. Required for nuclear localization.

It localises to the nucleus. It is found in the cytoplasm. The protein resides in the membrane. Recruited and tyrosine phosphorylated by several receptor systems, for example the T-cell, leptin and insulin receptors. Once phosphorylated, functions as an adapter protein in signal transduction cascades by binding to SH2 and SH3 domain-containing proteins. Role in G2-M progression in the cell cycle. Represses CBP-dependent transcriptional activation apparently by competing with other nuclear factors for binding to CBP. Also acts as a putative regulator of mRNA stability and/or translation rates and mediates mRNA nuclear export. Plays a role in the regulation of alternative splicing and influences mRNA splice site selection and exon inclusion. In Gallus gallus (Chicken), this protein is KH domain-containing, RNA-binding, signal transduction-associated protein 1.